Here is a 432-residue protein sequence, read N- to C-terminus: D-amino acid dehydrogenase (432 aa).

3 to 17 (VVVLGSGVVGVASAW) serves as a coordination point for FAD.

Belongs to the DadA oxidoreductase family. FAD serves as cofactor.

The enzyme catalyses a D-alpha-amino acid + A + H2O = a 2-oxocarboxylate + AH2 + NH4(+). It functions in the pathway amino-acid degradation; D-alanine degradation; NH(3) and pyruvate from D-alanine: step 1/1. Oxidative deamination of D-amino acids. The sequence is that of D-amino acid dehydrogenase from Cronobacter sakazakii (strain ATCC BAA-894) (Enterobacter sakazakii).